Here is a 110-residue protein sequence, read N- to C-terminus: MALWTRLLPLLALLALLGPDPAQAFVNQHLCGSHLVEALYLVCGERGFFYTPKSRREVEEQQGGQVELGGGPGAGLPQPLALEMALQKRGIVEQCCTSICSLYQLENYCN.

A signal peptide spans 1–24; the sequence is MALWTRLLPLLALLALLGPDPAQA. Disulfide bonds link Cys-31/Cys-96, Cys-43/Cys-109, and Cys-95/Cys-100. The propeptide at 57–87 is c peptide; the sequence is EVEEQQGGQVELGGGPGAGLPQPLALEMALQ.

The protein belongs to the insulin family. As to quaternary structure, heterodimer of a B chain and an A chain linked by two disulfide bonds.

The protein resides in the secreted. In terms of biological role, insulin decreases blood glucose concentration. It increases cell permeability to monosaccharides, amino acids and fatty acids. It accelerates glycolysis, the pentose phosphate cycle, and glycogen synthesis in liver. This is Insulin (INS) from Ictidomys tridecemlineatus (Thirteen-lined ground squirrel).